A 157-amino-acid polypeptide reads, in one-letter code: Rieske domain-containing protein (157 aa).

Met1 is subject to N-acetylmethionine. The residue at position 6 (Ser6) is a Phosphoserine. 2 Rieske domains span residues 16 to 94 (SSVC…TGEG) and 17 to 131 (SVCV…NIYV). Cys57, His59, Cys80, and His83 together coordinate [2Fe-2S] cluster.

Requires [2Fe-2S] cluster as cofactor.

The sequence is that of Rieske domain-containing protein (RFESD) from Homo sapiens (Human).